The primary structure comprises 637 residues: Multicopper oxidase LPR1 homolog 5 (637 aa).

A signal peptide spans 1 to 21 (MSPRIQQLAAVLLAAVVVVAA). N100 is a glycosylation site (N-linked (GlcNAc...) asparagine). Positions 209 and 211 each coordinate Cu cation. N234 is a glycosylation site (N-linked (GlcNAc...) asparagine). Cu cation contacts are provided by H257 and H259. 6 N-linked (GlcNAc...) asparagine glycosylation sites follow: N308, N349, N357, N425, N482, and N516. A Plastocyanin-like domain is found at 334–406 (PYLSVQRRRY…IVDFSRLPAA (73 aa)). Residues H522, H525, and H527 each contribute to the Cu cation site. N553 carries N-linked (GlcNAc...) asparagine glycosylation. Residues H618, C619, H620, H624, and M629 each coordinate Cu cation.

The protein belongs to the multicopper oxidase family. It depends on Cu cation as a cofactor. As to expression, highly expressed in roots and basal stems.

It is found in the endoplasmic reticulum membrane. Its function is as follows. Multicopper oxidase that may play a role in the maintenance of inorganic phosphate homeostasis. This is Multicopper oxidase LPR1 homolog 5 from Oryza sativa subsp. japonica (Rice).